We begin with the raw amino-acid sequence, 182 residues long: Isopentenyl-diphosphate Delta-isomerase (182 aa).

Mn(2+) is bound by residues H23 and H30. Positions 28-162 (PRHLAFSCHV…PWAFSPWLVE (135 aa)) constitute a Nudix hydrolase domain. The active site involves C65. A Mg(2+)-binding site is contributed by C65. A Mn(2+)-binding site is contributed by H67. A Mg(2+)-binding site is contributed by E85. Residues E112 and E114 each coordinate Mn(2+). The active site involves E114.

Belongs to the IPP isomerase type 1 family. It depends on Mg(2+) as a cofactor. Mn(2+) serves as cofactor.

Its subcellular location is the cytoplasm. The enzyme catalyses isopentenyl diphosphate = dimethylallyl diphosphate. The protein operates within isoprenoid biosynthesis; dimethylallyl diphosphate biosynthesis; dimethylallyl diphosphate from isopentenyl diphosphate: step 1/1. Its function is as follows. Catalyzes the 1,3-allylic rearrangement of the homoallylic substrate isopentenyl (IPP) to its highly electrophilic allylic isomer, dimethylallyl diphosphate (DMAPP). The sequence is that of Isopentenyl-diphosphate Delta-isomerase from Brevibacterium linens.